The following is a 443-amino-acid chain: Tryptophan synthase beta chain 2, chloroplastic (443 aa).

The tract at residues 1–32 is disordered; it reads PGPPPPAPEGRRRRGRGRNAAGQAVAAEASPA. The transit peptide at 1-45 directs the protein to the chloroplast; that stretch reads PGPPPPAPEGRRRRGRGRNAAGQAVAAEASPAAVEMGNGAAAPGL. The span at 18–32 shows a compositional bias: low complexity; the sequence is RNAAGQAVAAEASPA. K138 carries the post-translational modification N6-(pyridoxal phosphate)lysine.

Belongs to the TrpB family. Tetramer of two alpha and two beta chains. The cofactor is pyridoxal 5'-phosphate.

It is found in the plastid. It localises to the chloroplast. The enzyme catalyses (1S,2R)-1-C-(indol-3-yl)glycerol 3-phosphate + L-serine = D-glyceraldehyde 3-phosphate + L-tryptophan + H2O. It functions in the pathway amino-acid biosynthesis; L-tryptophan biosynthesis; L-tryptophan from chorismate: step 5/5. Its function is as follows. The beta subunit is responsible for the synthesis of L-tryptophan from indole and L-serine. The protein is Tryptophan synthase beta chain 2, chloroplastic (TSB2) of Zea mays (Maize).